The following is a 211-amino-acid chain: MTTLTRQDLNFGQVVADILCEFLEVAVHLILYVREVYPTGIFQKRKKYNVPVQMSCHPELNRYIQDTLHCVKPLIEKNDVEKVVVVILDKEHHPVERFVFEIAQPPLLSISSDSLLSHVEQLLRAFILKISVCDAVLDNNPPGCTFTLLVHTREAATRNMEKIQVIKDFPWILADEQDVHMQEPRLIPLKTMTSDILKMQLYVEERAQKST.

The HORMA domain occupies 13–203 (QVVADILCEF…SDILKMQLYV (191 aa)).

As to quaternary structure, homooligomer. Interacts with rev1. Interacts with rev3l. Interacts with fzr1 (in complex with the anaphase promoting complex APC). May interact with cdc20.

It localises to the nucleus. The protein localises to the cytoplasm. Its subcellular location is the cytoskeleton. The protein resides in the spindle. Functionally, adapter protein able to interact with different proteins and involved in different biological processes. Mediates the interaction between the error-prone DNA polymerase zeta catalytic subunit rev3l and the inserter polymerase rev1, thereby mediating the second polymerase switching in translesion DNA synthesis. Translesion DNA synthesis releases the replication blockade of replicative polymerases, stalled in presence of DNA lesions. May also play a role in signal transduction in response to DNA damage. May regulate the activation of the anaphase promoting complex APC thereby regulating progression through the cell cycle. Through transcriptional regulation may play a role in epithelial-mesenchymal transdifferentiation. Inhibits the fzr1-APC complex activity during mitosis. Plays a role in progression of mitosis. The polypeptide is Mitotic spindle assembly checkpoint protein MAD2B (mad2l2) (Xenopus laevis (African clawed frog)).